A 197-amino-acid chain; its full sequence is dCTP deaminase, dUMP-forming (197 aa).

Residues 105 to 110, D123, 131 to 133, Q152, Y166, K174, and Q178 each bind dCTP; these read RSSMGR and TLE. Residue E133 is the Proton donor/acceptor of the active site.

It belongs to the dCTP deaminase family. As to quaternary structure, homotrimer.

It carries out the reaction dCTP + 2 H2O = dUMP + NH4(+) + diphosphate. The protein operates within pyrimidine metabolism; dUMP biosynthesis; dUMP from dCTP: step 1/1. Bifunctional enzyme that catalyzes both the deamination of dCTP to dUTP and the hydrolysis of dUTP to dUMP without releasing the toxic dUTP intermediate. The sequence is that of dCTP deaminase, dUMP-forming from Methanosphaera stadtmanae (strain ATCC 43021 / DSM 3091 / JCM 11832 / MCB-3).